Here is a 374-residue protein sequence, read N- to C-terminus: UDP-N-acetylglucosamine--N-acetylmuramyl-(pentapeptide) pyrophosphoryl-undecaprenol N-acetylglucosamine transferase (374 aa).

Residues 13-15 (TGG), Asn-124, Arg-165, Ser-193, and Gln-294 each bind UDP-N-acetyl-alpha-D-glucosamine.

Belongs to the glycosyltransferase 28 family. MurG subfamily.

It localises to the cell inner membrane. It carries out the reaction di-trans,octa-cis-undecaprenyl diphospho-N-acetyl-alpha-D-muramoyl-L-alanyl-D-glutamyl-meso-2,6-diaminopimeloyl-D-alanyl-D-alanine + UDP-N-acetyl-alpha-D-glucosamine = di-trans,octa-cis-undecaprenyl diphospho-[N-acetyl-alpha-D-glucosaminyl-(1-&gt;4)]-N-acetyl-alpha-D-muramoyl-L-alanyl-D-glutamyl-meso-2,6-diaminopimeloyl-D-alanyl-D-alanine + UDP + H(+). It functions in the pathway cell wall biogenesis; peptidoglycan biosynthesis. Cell wall formation. Catalyzes the transfer of a GlcNAc subunit on undecaprenyl-pyrophosphoryl-MurNAc-pentapeptide (lipid intermediate I) to form undecaprenyl-pyrophosphoryl-MurNAc-(pentapeptide)GlcNAc (lipid intermediate II). This Rhizobium rhizogenes (strain K84 / ATCC BAA-868) (Agrobacterium radiobacter) protein is UDP-N-acetylglucosamine--N-acetylmuramyl-(pentapeptide) pyrophosphoryl-undecaprenol N-acetylglucosamine transferase.